We begin with the raw amino-acid sequence, 131 residues long: Inactive protein FON2 SPARE1 (131 aa).

The segment at 67 to 131 (SPSSLTTTDR…VPTGPNPLHH (65 aa)) is disordered. Over residues 76-97 (RHHHHHRHHGHHHHRGHDRWNR) the composition is skewed to basic residues.

Belongs to the CLV3/ESR signal peptide family. As to expression, expressed in all aerial apical meristems, including the floral and inflorescence meristems in the reproductive phase and the shoot apical meristem in the vegetative phase. Also detected in the primordia of lateral organs such as the leaf and the floral organs.

Functionally, non functional suppressor of the fon2 mutation. In Oryza sativa subsp. japonica, the protein has a single amino acid substitution at the putative processing site of the signal peptide while in all the other varieties/species of domesticated and wild rice tested the protein is functional. This is Inactive protein FON2 SPARE1 (FOS1) from Oryza sativa subsp. japonica (Rice).